The primary structure comprises 141 residues: 6,7-dimethyl-8-ribityllumazine synthase (141 aa).

5-amino-6-(D-ribitylamino)uracil is bound by residues F11, A42–E44, and V66–I68. Residue E71–T72 participates in (2S)-2-hydroxy-3-oxobutyl phosphate binding. The active-site Proton donor is the H74. N98 is a 5-amino-6-(D-ribitylamino)uracil binding site. R112 serves as a coordination point for (2S)-2-hydroxy-3-oxobutyl phosphate.

It belongs to the DMRL synthase family.

The enzyme catalyses (2S)-2-hydroxy-3-oxobutyl phosphate + 5-amino-6-(D-ribitylamino)uracil = 6,7-dimethyl-8-(1-D-ribityl)lumazine + phosphate + 2 H2O + H(+). It participates in cofactor biosynthesis; riboflavin biosynthesis; riboflavin from 2-hydroxy-3-oxobutyl phosphate and 5-amino-6-(D-ribitylamino)uracil: step 1/2. Its function is as follows. Catalyzes the formation of 6,7-dimethyl-8-ribityllumazine by condensation of 5-amino-6-(D-ribitylamino)uracil with 3,4-dihydroxy-2-butanone 4-phosphate. This is the penultimate step in the biosynthesis of riboflavin. This is 6,7-dimethyl-8-ribityllumazine synthase from Sphingopyxis alaskensis (strain DSM 13593 / LMG 18877 / RB2256) (Sphingomonas alaskensis).